The chain runs to 305 residues: Glycine--tRNA ligase alpha subunit (305 aa).

It belongs to the class-II aminoacyl-tRNA synthetase family. In terms of assembly, tetramer of two alpha and two beta subunits.

Its subcellular location is the cytoplasm. It catalyses the reaction tRNA(Gly) + glycine + ATP = glycyl-tRNA(Gly) + AMP + diphosphate. The chain is Glycine--tRNA ligase alpha subunit from Streptococcus uberis (strain ATCC BAA-854 / 0140J).